The sequence spans 146 residues: ATP synthase epsilon chain (146 aa).

This sequence belongs to the ATPase epsilon chain family. As to quaternary structure, F-type ATPases have 2 components, CF(1) - the catalytic core - and CF(0) - the membrane proton channel. CF(1) has five subunits: alpha(3), beta(3), gamma(1), delta(1), epsilon(1). CF(0) has three main subunits: a, b and c.

The protein localises to the cell membrane. In terms of biological role, produces ATP from ADP in the presence of a proton gradient across the membrane. The chain is ATP synthase epsilon chain from Lactobacillus helveticus (strain DPC 4571).